Consider the following 398-residue polypeptide: Bone morphogenetic protein 2-A (398 aa).

The N-terminal stretch at Met-1 to Gly-23 is a signal peptide. Positions Leu-24 to Arg-284 are excised as a propeptide. 3 N-linked (GlcNAc...) asparagine glycosylation sites follow: Asn-137, Asn-202, and Asn-340. 3 disulfides stabilise this stretch: Cys-298-Cys-363, Cys-327-Cys-395, and Cys-331-Cys-397.

Belongs to the TGF-beta family. Homodimer; disulfide-linked.

The protein localises to the secreted. Its function is as follows. Induces cartilage and bone formation. This chain is Bone morphogenetic protein 2-A (bmp2-a), found in Xenopus laevis (African clawed frog).